Consider the following 347-residue polypeptide: NADH-ubiquinone oxidoreductase chain 2 (347 aa).

11 helical membrane passes run 1-21, 25-45, 59-79, 96-116, 123-143, 153-173, 178-198, 200-220, 239-259, 278-298, and 325-345; these read MNPL…IITM, HWLT…PLIM, YFLI…INFM, TIIL…FWVP, LLST…SILY, IILA…LNQT, IMAY…IYNP, LMLL…TILI, ILMM…PLSG, ISLT…RLIY, and FLPT…MMFI.

This sequence belongs to the complex I subunit 2 family. In terms of assembly, core subunit of respiratory chain NADH dehydrogenase (Complex I) which is composed of 45 different subunits. Interacts with TMEM242.

Its subcellular location is the mitochondrion inner membrane. The enzyme catalyses a ubiquinone + NADH + 5 H(+)(in) = a ubiquinol + NAD(+) + 4 H(+)(out). In terms of biological role, core subunit of the mitochondrial membrane respiratory chain NADH dehydrogenase (Complex I) that is believed to belong to the minimal assembly required for catalysis. Complex I functions in the transfer of electrons from NADH to the respiratory chain. The immediate electron acceptor for the enzyme is believed to be ubiquinone. The polypeptide is NADH-ubiquinone oxidoreductase chain 2 (Oryzorictes hova (Hova rice tenrec)).